The primary structure comprises 292 residues: MRPCMDGKRLNLHLVSDATGDTLNAVARAASVQFEGSDIHLHRWSLIRSRLQLHRVLEGIEAERGPVLCSLLDQALRHELDEACQRLGLRILHVLDPVFDLLAEELGTPTRPTPGRQYVLDADYFRRIDAMHFVLSHDDGQALRGLAEADVILVGVSRSSKTPTSFYLANRGIKAANVPMVPGIELPGVLDDPPCPVVGLFIDAEPLIEIRRHRLTLLGQGGGAAGAFRPDSGDYVDEEAVKAELLWARRTCSARGWPTVNVTRRSIEETAAAVLKLMDAWHERRRRTATSA.

Residue 155 to 162 coordinates ADP; that stretch reads GVSRSSKT.

This sequence belongs to the pyruvate, phosphate/water dikinase regulatory protein family. PDRP subfamily.

It carries out the reaction N(tele)-phospho-L-histidyl/L-threonyl-[pyruvate, phosphate dikinase] + ADP = N(tele)-phospho-L-histidyl/O-phospho-L-threonyl-[pyruvate, phosphate dikinase] + AMP + H(+). The enzyme catalyses N(tele)-phospho-L-histidyl/O-phospho-L-threonyl-[pyruvate, phosphate dikinase] + phosphate + H(+) = N(tele)-phospho-L-histidyl/L-threonyl-[pyruvate, phosphate dikinase] + diphosphate. Its function is as follows. Bifunctional serine/threonine kinase and phosphorylase involved in the regulation of the pyruvate, phosphate dikinase (PPDK) by catalyzing its phosphorylation/dephosphorylation. The polypeptide is Putative pyruvate, phosphate dikinase regulatory protein (Acidiphilium cryptum (strain JF-5)).